We begin with the raw amino-acid sequence, 439 residues long: tRNA-2-methylthio-N(6)-dimethylallyladenosine synthase (439 aa).

The MTTase N-terminal domain occupies 2-119 (KYIYIKTWGC…LAQMIDKVEK (118 aa)). Positions 11, 48, 82, 156, 160, and 163 each coordinate [4Fe-4S] cluster. A Radical SAM core domain is found at 142–374 (KKTGYTASIS…QNCINKQTMS (233 aa)). The region spanning 377–439 (RKMLKSTQSV…HTHSLQGELI (63 aa)) is the TRAM domain.

The protein belongs to the methylthiotransferase family. MiaB subfamily. Monomer. It depends on [4Fe-4S] cluster as a cofactor.

Its subcellular location is the cytoplasm. It catalyses the reaction N(6)-dimethylallyladenosine(37) in tRNA + (sulfur carrier)-SH + AH2 + 2 S-adenosyl-L-methionine = 2-methylsulfanyl-N(6)-dimethylallyladenosine(37) in tRNA + (sulfur carrier)-H + 5'-deoxyadenosine + L-methionine + A + S-adenosyl-L-homocysteine + 2 H(+). Catalyzes the methylthiolation of N6-(dimethylallyl)adenosine (i(6)A), leading to the formation of 2-methylthio-N6-(dimethylallyl)adenosine (ms(2)i(6)A) at position 37 in tRNAs that read codons beginning with uridine. The sequence is that of tRNA-2-methylthio-N(6)-dimethylallyladenosine synthase from Buchnera aphidicola subsp. Schizaphis graminum (strain Sg).